The following is a 155-amino-acid chain: MESINESYDDSSSFGQDSLLYNRPFAYLYLSFHLKLLYSVPASYIAMIRAGSVGKKSTCEYTYWDDGVGEEVMGDDSWDYEGRKISHIYVAFDEVIMSIQFGFLENGALVLSKQHGGIEEGSNFRVVSFVSITIIYFCVCVRSGQVLFLMKFKRS.

The next 2 helical transmembrane spans lie at 26–48 (AYLYLSFHLKLLYSVPASYIAMI) and 127–149 (VSFVSITIIYFCVCVRSGQVLFL). One can recognise a Jacalin-type lectin domain in the interval 47–155 (MIRAGSVGKK…VLFLMKFKRS (109 aa)).

The protein belongs to the jacalin lectin family.

It is found in the membrane. This Arabidopsis thaliana (Mouse-ear cress) protein is Probable jacalin-related lectin 26 (JAL26).